The sequence spans 145 residues: Large ribosomal subunit protein uL15 (145 aa).

Residues 1–58 (MKLHELSPSEGSRKKRKRVGRGPGSGMGGTSTRGNKGHNQRSGGGTRPGFEGGQMPLH) form a disordered region. Gly residues-rich tracts occupy residues 21 to 31 (RGPGSGMGGTS) and 42 to 52 (SGGGTRPGFEG).

The protein belongs to the universal ribosomal protein uL15 family. In terms of assembly, part of the 50S ribosomal subunit.

Functionally, binds to the 23S rRNA. The polypeptide is Large ribosomal subunit protein uL15 (Desulforapulum autotrophicum (strain ATCC 43914 / DSM 3382 / VKM B-1955 / HRM2) (Desulfobacterium autotrophicum)).